We begin with the raw amino-acid sequence, 360 residues long: D-alanine--D-alanine ligase (360 aa).

The region spanning 149–353 is the ATP-grasp domain; the sequence is KKLMAAEGLP…YEELLDVLVQ (205 aa). Residue 176–231 coordinates ATP; that stretch reads KNLLGLPVFVKPARGGSSIGISRVTAWEDFNKAVGLARAHDEKVIVESEIVGSEVE. Mg(2+)-binding residues include Asp-308, Glu-320, and Asn-322.

It belongs to the D-alanine--D-alanine ligase family. Mg(2+) is required as a cofactor. Requires Mn(2+) as cofactor.

Its subcellular location is the cytoplasm. The catalysed reaction is 2 D-alanine + ATP = D-alanyl-D-alanine + ADP + phosphate + H(+). The protein operates within cell wall biogenesis; peptidoglycan biosynthesis. In terms of biological role, cell wall formation. The polypeptide is D-alanine--D-alanine ligase (Corynebacterium glutamicum (strain R)).